We begin with the raw amino-acid sequence, 225 residues long: PKHD-type hydroxylase KPK_3192 (225 aa).

The 100-residue stretch at Thr78–Ser177 folds into the Fe2OG dioxygenase domain. Fe cation is bound by residues His96, Asp98, and His158. Arg168 lines the 2-oxoglutarate pocket.

It depends on Fe(2+) as a cofactor. The cofactor is L-ascorbate.

In Klebsiella pneumoniae (strain 342), this protein is PKHD-type hydroxylase KPK_3192.